The following is a 92-amino-acid chain: UPF0250 protein VP0718 (92 aa).

This sequence belongs to the UPF0250 family.

The polypeptide is UPF0250 protein VP0718 (Vibrio parahaemolyticus serotype O3:K6 (strain RIMD 2210633)).